The sequence spans 121 residues: MALDKDQFIEDLKGASITDLNDLVKAIEDEFGVSAAAPVAAAGAAGGAAEAKTSFNVELTSGGSAKIKVIKAVREITGAGLKDAKDMVDNAPSVIKEDVSEDEANELKAKLEEAGATVEVK.

Belongs to the bacterial ribosomal protein bL12 family. In terms of assembly, homodimer. Part of the ribosomal stalk of the 50S ribosomal subunit. Forms a multimeric L10(L12)X complex, where L10 forms an elongated spine to which 2 to 4 L12 dimers bind in a sequential fashion. Binds GTP-bound translation factors.

In terms of biological role, forms part of the ribosomal stalk which helps the ribosome interact with GTP-bound translation factors. Is thus essential for accurate translation. The chain is Large ribosomal subunit protein bL12 from Pediococcus pentosaceus (strain ATCC 25745 / CCUG 21536 / LMG 10740 / 183-1w).